Here is a 245-residue protein sequence, read N- to C-terminus: GATA zinc finger domain-containing protein 1 (245 aa).

Residues 9–33 (CSMCKTNTSSMWKKGSQGEILCNNC) form a GATA-type zinc finger. The span at 39–70 (TAAGGNNNNNSSSSTSGSSSYTGTTFASTSTS) shows a compositional bias: low complexity. A disordered region spans residues 39–110 (TAAGGNNNNN…PAAEKKVSTK (72 aa)). The span at 71–80 (QQSNGGNTKQ) shows a compositional bias: polar residues.

The protein resides in the nucleus. In terms of biological role, component of some chromatin complex recruited to chromatin sites methylated 'Lys-4' of histone H3 (H3K4me), with a preference for trimethylated form (H3K4me3). The protein is GATA zinc finger domain-containing protein 1 (gatad1) of Xenopus laevis (African clawed frog).